We begin with the raw amino-acid sequence, 289 residues long: MKMPASMEPDWKALLRVLRAHSATFYLGSLLFPKEARKGAWAVYAACRLGDEAVDGEGGGPEALEAWWAGVERAYRGRPLAEWEKGLAWALERWDIPFEAFLHMREGFLTDLGPVRLGTEAELLRYCYQVAGTVGRMMAPIAGGGKEAEARAVKLGQAMQLTNILRDVGEDLERDRVYLPLDLLRAHGVEVEDLRAGRVTPGYRALMAHLEGKARALYREGLAGLGHLKVGRAAIALAALQYRGILDKLRLSGYDNLGRRAHLKAWERALLLPKAFLAARFPPRPEGSP.

It belongs to the phytoene/squalene synthase family. Requires ATP as cofactor. It depends on Mn(2+) as a cofactor. The cofactor is Mg(2+).

Its pathway is carotenoid biosynthesis; phytoene biosynthesis. Its function is as follows. Involved in the biosynthesis of carotenoids. Catalyzes the condensation of two molecules of geranylgeranyl diphosphate (GGPP) to give prephytoene diphosphate (PPPP) and the subsequent rearrangement of the cyclopropylcarbinyl intermediate to yield phytoene. This is Phytoene synthase (crtB) from Thermus thermophilus (strain ATCC BAA-163 / DSM 7039 / HB27).